A 178-amino-acid polypeptide reads, in one-letter code: Non-specific lipid transfer protein-like 1 (178 aa).

The signal sequence occupies residues 1–26 (MAVAARAAAVACLLVVGLAAVAGVDG). 2 disulfides stabilise this stretch: Cys50/Cys68 and Cys69/Cys110. A glycan (N-linked (GlcNAc...) asparagine) is linked at Asn99. The GPI-anchor amidated alanine moiety is linked to residue Ala149. Positions 150–178 (AARSPMASTTAVLVVAAAVAAPLLAFFHF) are cleaved as a propeptide — removed in mature form.

Belongs to the plant LTP family. In terms of processing, O-glycosylated on hydroxyprolines; noncontiguous hydroxylproline residues are glycosylated with arabinogalactan. In terms of tissue distribution, expressed in roots, stems, leaves, flowers and seeds.

The protein resides in the vacuole. It is found in the aleurone grain membrane. The polypeptide is Non-specific lipid transfer protein-like 1 (LTPL1) (Oryza sativa subsp. japonica (Rice)).